Reading from the N-terminus, the 245-residue chain is MVEYYDVLGVQRNSSPDDIKKAYRRLALKWHPDKNPDNKEEAERRFKEVAEAYEVLSDSKKRDIYDKYGKEGLAGGGGGGGSHYDVPFQFGFTFRSPDDVFREFFGGRDPFSFDLFAEDPFDDFFGRRGHRGNRSRPGGGSFLSTFGGFPAFGPSFSPFDSGFSSSFGSFGGHGGFTSFSSSSFGGSGMGNVRSVSTSTKIVNGRRVTTKRIVENGQERVEVEEDGQLKSLTINGKEQLLRLDNK.

In terms of domain architecture, J spans 3 to 69; sequence EYYDVLGVQR…KKRDIYDKYG (67 aa).

Homooligomer.

Its subcellular location is the cytoplasm. It localises to the perinuclear region. The protein resides in the nucleus. Functionally, has a stimulatory effect on the ATPase activity of HSP70 in a dose-dependent and time-dependent manner and hence acts as a co-chaperone of HSP70. Plays an indispensable role in the organization of KRT8/KRT18 filaments. Acts as an endogenous molecular chaperone for neuronal proteins including huntingtin. Suppresses aggregation and toxicity of polyglutamine-containing, aggregation-prone proteins. Also reduces cellular toxicity and caspase-3 activity. The chain is DnaJ homolog subfamily B member 6-B (dnajb6-b) from Xenopus laevis (African clawed frog).